The following is a 572-amino-acid chain: MDRAGADMWASTFTLAMAERKPQDVWVLLPEHSLVPGCLDGGGVQYLLVGLSRLQCGHCPGTWDSAHVHVLFHLWWDRASHRGLVKMRIWGQRCRLCPAPGDCQVRPPGEQPFLSRLVLHILQDCYGDGPGPARHPREAYEGCCEACELGVCFLQKAPDPAWSANATKGNFPATAWGGTGTVSRGKPLSTPGDDLGKGGVVIAIPFSLVGTSNDQVPIAEGPAPPAGASLPVTGSCEALVIGQGSIFLSGDSVAMPGGKGFPVAIGDPLFHGPGLLGSSIQTFELKGFLFKGRGSLCSPVGVAQGWGPISLNNGLVPVGKHTPTVFYCVGLSASGEGSLTFPSSLTSIFTNTLSEPTDGPVATKEASITFPFIFTDVKDAVAEVAEGNGKEGGGQGLVPVGHDALPETNAGGLPSQVKGSLALPFPADVQGKDAFTDITEGKEKEGGLVTAGHDAPLEANAEGPITVSEGCITIPFAVFDVIKRKGGGHVAYGPQGNGCFSQGYYQKRQLRSRFHKARCGCRREEDERPGRACRRPHAEPYEDFWIWVSMTVCVFWLMCMCRLNPGIYPQQV.

The 3CxxC-type zinc finger occupies 52–148 (SRLQCGHCPG…AYEGCCEACE (97 aa)). Residues 544–560 (FWIWVSMTVCVFWLMCM) traverse the membrane as a helical segment.

It is found in the membrane. The polypeptide is Receptor-transporting protein 5 (RTP5) (Homo sapiens (Human)).